The chain runs to 241 residues: Outer membrane protein A (241 aa).

The next 5 beta stranded transmembrane spans lie at 1-8 (LTAKLSYP), 13-21 (LDIYTRLGG), 46-55 (PVFAGGVEYA), 60-67 (IATRLEYQ), and 86-94 (MLSVGVSYR). Repeat copies occupy residues 105–106 (AP), 107–108 (AP), 109–110 (AP), and 111–112 (AP). The segment at 105–112 (APAPAPAP) is 4 X 2 AA tandem repeats of A-P. Residues 114–241 (VQTKHFTLKS…RRVEIEVKGV (128 aa)) enclose the OmpA-like domain. The cysteines at positions 215 and 227 are disulfide-linked.

The protein belongs to the outer membrane OOP (TC 1.B.6) superfamily. OmpA family. In terms of assembly, monomer and homodimer.

It is found in the cell outer membrane. With TolR probably plays a role in maintaining the position of the peptidoglycan cell wall in the periplasm. Acts as a porin with low permeability that allows slow penetration of small solutes; an internal gate slows down solute passage. In Shimwellia blattae (Escherichia blattae), this protein is Outer membrane protein A.